The sequence spans 246 residues: Myelin-oligodendrocyte glycoprotein (246 aa).

Positions 1 to 28 are cleaved as a signal peptide; sequence MACLWSFSWPSCFLSLLLLLLQLSCSYA. The Extracellular portion of the chain corresponds to 29–156; it reads GQFRVIGPGY…FYWVNPGVLT (128 aa). One can recognise an Ig-like V-type domain in the interval 31-144; it reads FRVIGPGYPI…EEAAMELKVE (114 aa). Cys52 and Cys126 are joined by a disulfide. Asn59 carries N-linked (GlcNAc...) asparagine glycosylation. Residues 157–177 traverse the membrane as a helical segment; that stretch reads LIALVPTILLQVPVGLVFLFL. The Cytoplasmic portion of the chain corresponds to 178–209; the sequence is QHRLRGKLRAEVENLHRTFDPHFLRVPCWKIT. A helical transmembrane segment spans residues 210 to 230; sequence LFVIVPVLGPLVALIICYNWL. At 231–246 the chain is on the extracellular side; sequence HRRLAGQFLEELRNPF.

The protein belongs to the immunoglobulin superfamily. BTN/MOG family. In terms of assembly, homodimer. Found exclusively in the CNS, where it is localized on the surface of myelin and oligodendrocyte cytoplasmic membranes. Reduced expression levels are observed in jimpy and quacking dysmyelinating mutant mice.

The protein localises to the membrane. In terms of biological role, minor component of the myelin sheath. May be involved in completion and/or maintenance of the myelin sheath and in cell-cell communication. Mediates homophilic cell-cell adhesion. In Mus musculus (Mouse), this protein is Myelin-oligodendrocyte glycoprotein (Mog).